The following is a 71-amino-acid chain: UPF0435 protein BLi00816/BL03111 (71 aa).

It belongs to the UPF0435 family.

This Bacillus licheniformis (strain ATCC 14580 / DSM 13 / JCM 2505 / CCUG 7422 / NBRC 12200 / NCIMB 9375 / NCTC 10341 / NRRL NRS-1264 / Gibson 46) protein is UPF0435 protein BLi00816/BL03111.